Reading from the N-terminus, the 655-residue chain is Interferon-induced GTP-binding protein Mx2 (655 aa).

A compositionally biased stretch (polar residues) spans 1-18 (MVLSTEENTGVDSVNLPS). The interval 1-28 (MVLSTEENTGVDSVNLPSGETGLGEKDQ) is disordered. The Dynamin-type G domain occupies 60 to 333 (DLALPAIAVI…LISHICKSLP (274 aa)). Positions 70–77 (GDQSSGKS) are G1 motif. 70-77 (GDQSSGKS) serves as a coordination point for GTP. The interval 95 to 97 (VTR) is G2 motif. Residues 171–174 (DLPG) are G3 motif. GTP contacts are provided by residues 171-175 (DLPGI) and 240-243 (TKPD). Residues 240-243 (TKPD) form a G4 motif region. Residues 272–275 (KCRG) are G5 motif. Residues 542–562 (EAEEEKKTKHGTSSSSQSQDL) are disordered. Over residues 552 to 562 (GTSSSSQSQDL) the composition is skewed to low complexity. One can recognise a GED domain in the interval 567 to 655 (MAEIFQHLNA…ARRRLAKFPG (89 aa)).

Belongs to the TRAFAC class dynamin-like GTPase superfamily. Dynamin/Fzo/YdjA family.

Its subcellular location is the cytoplasm. In terms of biological role, interferon-induced dynamin-like GTPase with antiviral activity against vesicular stomatitis virus (VSV) and Hantaan virus (HNTV). In Mus musculus (Mouse), this protein is Interferon-induced GTP-binding protein Mx2 (Mx2).